The primary structure comprises 513 residues: Cobyric acid synthase (513 aa).

In terms of domain architecture, GATase cobBQ-type spans 270 to 470 (RLRIAIVAYP…THGLFESPAV (201 aa)). The active-site Nucleophile is the Cys-351. His-462 is an active-site residue.

Belongs to the CobB/CobQ family. CobQ subfamily.

The protein operates within cofactor biosynthesis; adenosylcobalamin biosynthesis. In terms of biological role, catalyzes amidations at positions B, D, E, and G on adenosylcobyrinic A,C-diamide. NH(2) groups are provided by glutamine, and one molecule of ATP is hydrogenolyzed for each amidation. The protein is Cobyric acid synthase of Leptothrix cholodnii (strain ATCC 51168 / LMG 8142 / SP-6) (Leptothrix discophora (strain SP-6)).